Here is a 326-residue protein sequence, read N- to C-terminus: Target of rapamycin complex subunit LST8 (326 aa).

Met-1 carries the N-acetylmethionine modification. 5 WD repeats span residues 1–37 (MNTT…CTRT), 40–80 (HQDS…PIIS), 83–122 (GVSK…LQCQ), 126–165 (QVNA…NEQL), and 168–207 (EPES…GDDV). Thr-51 carries the phosphothreonine modification. Lys-86 is covalently cross-linked (Glycyl lysine isopeptide (Lys-Gly) (interchain with G-Cter in SUMO3)). Residues Lys-215, Lys-245, and Lys-261 each participate in a glycyl lysine isopeptide (Lys-Gly) (interchain with G-Cter in SUMO3) cross-link. Residues 218 to 257 (AHTRYALQCRFSPDSTLLATCSADQTCKIWRTSNFSLMTE) form a WD 6 repeat. The stretch at 268 to 309 (SSRGWMWGCAFSGDSQYIVTASSDNLARLWCVETGEIKREYG) is one WD 7 repeat. A Glycyl lysine isopeptide (Lys-Gly) (interchain with G-Cter in SUMO3); alternate cross-link involves residue Lys-305. Residues Lys-305 and Lys-313 each participate in a glycyl lysine isopeptide (Lys-Gly) (interchain with G-Cter in ubiquitin); alternate cross-link. Lys-313 participates in a covalent cross-link: Glycyl lysine isopeptide (Lys-Gly) (interchain with G-Cter in SUMO1); alternate.

This sequence belongs to the WD repeat LST8 family. As to quaternary structure, part of the mechanistic target of rapamycin complex 1 (mTORC1) which contains MTOR, MLST8 and RPTOR. mTORC1 associates with AKT1S1/PRAS40, which inhibits its activity. mTORC1 binds to and is inhibited by FKBP12-rapamycin. Within mTORC1, interacts directly with MTOR and RPTOR. Component of the mechanistic target of rapamycin complex 2 (mTORC2), consisting in two heterotretramers composed of MTOR, MLST8, RICTOR and MAPKAP1/SIN1. Contrary to mTORC1, mTORC2 does not bind to and is not sensitive to FKBP12-rapamycin. mTORC1 and mTORC2 associate with DEPTOR, which regulates their activity. Interacts with RHEB. Interacts with MEAK7. Interacts with SIK3. Interacts with SLC38A7; this interaction promotes the recruitment of mTORC1 to the lysosome and its subsequent activation. In terms of processing, phosphorylation at Thr-51 by CDK1 promotes ubiquitination by the SCF(FBXW7) complex, followed by degradation. Ubiquitination by the SCF(FBXW7) and SCF(FBXW11) complexes following phosphorylation at Thr-51 by CDK1, leads to its degradation by the proteasome. Ubiquitination at Lys-305 and Lys-313 by TRAF2 via 'Lys-63'-linked polyubiquitin chains inhibits formation of the mTORC2 complex, while promoting formation of the mTORC1 complex: ubiquitination disrupts the interaction between MLST8 and MAPKAP1/SIN1 to favor mTORC1 assembly. Deubiquitination at Lys-305 and Lys-313 by OTUD7B promotes MLST8 interaction with MAPKAP1/SIN1, facilitating mTORC2 assembly. Post-translationally, sumoylation with SUMO1, SUMO2 and SUMO3 promotes assembly of both mTORC1 and mTORC2 complexes.

It localises to the lysosome membrane. The protein localises to the cytoplasm. Subunit of both mTORC1 and mTORC2, which regulates cell growth and survival in response to nutrient and hormonal signals. mTORC1 is activated in response to growth factors or amino acids. In response to nutrients, mTORC1 is recruited to the lysosome membrane and promotes protein, lipid and nucleotide synthesis by phosphorylating several substrates, such as ribosomal protein S6 kinase (RPS6KB1 and RPS6KB2) and EIF4EBP1 (4E-BP1). In the same time, it inhibits catabolic pathways by phosphorylating the autophagy initiation components ULK1 and ATG13, as well as transcription factor TFEB, a master regulators of lysosomal biogenesis and autophagy. The mTORC1 complex is inhibited in response to starvation and amino acid depletion. Within mTORC1, MLST8 interacts directly with MTOR and enhances its kinase activity. In nutrient-poor conditions, stabilizes the MTOR-RPTOR interaction and favors RPTOR-mediated inhibition of MTOR activity. As part of the mTORC2 complex, transduces signals from growth factors to pathways involved in proliferation, cytoskeletal organization, lipogenesis and anabolic output. mTORC2 is also activated by growth factors, but seems to be nutrient-insensitive. In response to growth factors, mTORC2 phosphorylates and activates AGC protein kinase family members, including AKT (AKT1, AKT2 and AKT3), PKC (PRKCA, PRKCB and PRKCE) and SGK1. mTORC2 functions upstream of Rho GTPases to regulate the actin cytoskeleton, probably by activating one or more Rho-type guanine nucleotide exchange factors. mTORC2 promotes the serum-induced formation of stress-fibers or F-actin. mTORC2 plays a critical role in AKT1 activation by mediating phosphorylation of different sites depending on the context, such as 'Thr-450', 'Ser-473', 'Ser-477' or 'Thr-479', facilitating the phosphorylation of the activation loop of AKT1 on 'Thr-308' by PDPK1/PDK1 which is a prerequisite for full activation. mTORC2 regulates the phosphorylation of SGK1 at 'Ser-422'. mTORC2 also modulates the phosphorylation of PRKCA on 'Ser-657'. Within mTORC2, MLST8 acts as a bridge between MAPKAP1/SIN1 and MTOR. This chain is Target of rapamycin complex subunit LST8, found in Mus musculus (Mouse).